We begin with the raw amino-acid sequence, 170 residues long: Probable inactive uracil-DNA glycosylase, mitochondrial (170 aa).

Residues 1 to 53 (MALSTPKTLMDFFQPAKRLKASPSSSSSFPAVSVAGRSRDLGSVANSPPRVTV) constitute a mitochondrion transit peptide.

This sequence belongs to the uracil-DNA glycosylase (UDG) superfamily. UNG family.

It is found in the mitochondrion. Functionally, probable inactive paralog of AtUNG (AC Q9LIH6) generated by a gene duplication event and subsequently disrupted by at least two transposon insertions. The sequence is that of Probable inactive uracil-DNA glycosylase, mitochondrial from Arabidopsis thaliana (Mouse-ear cress).